Consider the following 385-residue polypeptide: UPF0764 protein C16orf89 homolog (385 aa).

The first 20 residues, 1 to 20 (MARLGLLLLLLLALPPHFSS), serve as a signal peptide directing secretion. Residues 344–385 (AHPEYYPNHGDPYSSSQSPASNYQDGAAGPDVQRTGRPLSVS) are disordered. Residues 356-367 (YSSSQSPASNYQ) are compositionally biased toward polar residues.

The protein belongs to the UPF0764 family. As to quaternary structure, homodimer. Glycosylated. As to expression, predominantly expressed in thyroid tissue.

The protein localises to the secreted. The chain is UPF0764 protein C16orf89 homolog from Mus musculus (Mouse).